A 348-amino-acid polypeptide reads, in one-letter code: Trans-L-3-hydroxyproline dehydratase (348 aa).

The active-site Proton acceptor is the C101. Residues 102–103, D263, and 268–269 contribute to the substrate site; these read GH and GS.

This sequence belongs to the proline racemase family. Homodimer.

It carries out the reaction trans-3-hydroxy-L-proline = 1-pyrroline-2-carboxylate + H2O. Its function is as follows. Catalyzes the dehydration of trans-3-hydroxy-L-proline to delta-1-pyrroline-2-carboxylate (Pyr2C). The chain is Trans-L-3-hydroxyproline dehydratase (l3hypdh) from Xenopus tropicalis (Western clawed frog).